The sequence spans 72 residues: DNA-directed RNA polymerase subunit omega (72 aa).

Belongs to the RNA polymerase subunit omega family. As to quaternary structure, the RNAP catalytic core consists of 2 alpha, 1 beta, 1 beta' and 1 omega subunit. When a sigma factor is associated with the core the holoenzyme is formed, which can initiate transcription.

The catalysed reaction is RNA(n) + a ribonucleoside 5'-triphosphate = RNA(n+1) + diphosphate. Its function is as follows. Promotes RNA polymerase assembly. Latches the N- and C-terminal regions of the beta' subunit thereby facilitating its interaction with the beta and alpha subunits. The sequence is that of DNA-directed RNA polymerase subunit omega from Laribacter hongkongensis (strain HLHK9).